Here is a 356-residue protein sequence, read N- to C-terminus: Phosphate acyltransferase (356 aa).

Belongs to the PlsX family. In terms of assembly, homodimer. Probably interacts with PlsY.

The protein resides in the cytoplasm. The catalysed reaction is a fatty acyl-[ACP] + phosphate = an acyl phosphate + holo-[ACP]. It participates in lipid metabolism; phospholipid metabolism. Its function is as follows. Catalyzes the reversible formation of acyl-phosphate (acyl-PO(4)) from acyl-[acyl-carrier-protein] (acyl-ACP). This enzyme utilizes acyl-ACP as fatty acyl donor, but not acyl-CoA. The sequence is that of Phosphate acyltransferase from Stutzerimonas stutzeri (strain A1501) (Pseudomonas stutzeri).